A 97-amino-acid polypeptide reads, in one-letter code: YcgL domain-containing protein PA14_47450 (97 aa).

Residues 3–87 (RICSVYKSPR…GEEEYIEHLP (85 aa)) enclose the YcgL domain.

The polypeptide is YcgL domain-containing protein PA14_47450 (Pseudomonas aeruginosa (strain UCBPP-PA14)).